Here is a 62-residue protein sequence, read N- to C-terminus: MDKNRIEGAAKQVKGSVKEAIGRVTGDKSTELEGAAEKNIGKVQRKAGELADDVRDATKSTR.

The tract at residues 32–62 (LEGAAEKNIGKVQRKAGELADDVRDATKSTR) is disordered.

Belongs to the UPF0337 (CsbD) family.

The polypeptide is UPF0337 protein XCC0070 (Xanthomonas campestris pv. campestris (strain ATCC 33913 / DSM 3586 / NCPPB 528 / LMG 568 / P 25)).